Here is a 146-residue protein sequence, read N- to C-terminus: Single-stranded DNA-binding protein, mitochondrial (146 aa).

Residues 1–22 constitute a mitochondrion transit peptide; sequence MQHTRRMLNPLLTGLRNLPARG. One can recognise an SSB domain in the interval 38 to 142; the sequence is VNTVTILGRV…IIADDVLFFR (105 aa).

In terms of assembly, homotetramer. Uniformly distributed in the early embryo. High levels detected in the anterior and posterior midgut primordia of stage 12 embryos. In larvae, high levels were detected in proliferating tissues including the CNS and digestive tract. In adults, highly expressed in the CNS, digestive tract and ovary.

It localises to the mitochondrion. Its function is as follows. Binds preferentially and cooperatively to pyrimidine rich single-stranded DNA (ss-DNA). Required to maintain the copy number of mitochondrial DNA (mtDNA) and plays crucial roles during mtDNA replication that stimulate activity of the gamma complex polymerase PolG1/tam at the replication fork. Promotes PolG1 activity largely by organizing the template DNA and eliminating secondary structures to favor ss-DNA conformations that facilitate PolG1 activity. This Drosophila melanogaster (Fruit fly) protein is Single-stranded DNA-binding protein, mitochondrial (mtSSB).